Reading from the N-terminus, the 946-residue chain is Increased sodium tolerance protein 2 (946 aa).

Topologically, residues 1–121 are cytoplasmic; the sequence is MSQTITSLDP…SNLTNNPKQS (121 aa). A helical transmembrane segment spans residues 122–142; sequence LYFAFLQNYIKWLIPFSFFGL. At 143–153 the chain is on the extracellular side; the sequence is SIRFLSNFTYE. The chain crosses the membrane as a helical span at residues 154–174; the sequence is FNSTYSLFAILWTLSFTAFWL. At 175-217 the chain is on the cytoplasmic side; that stretch reads YKYEPFWSDRLSKYSSFSTIEFLQDKQKAQKKASSVIMLKKCC. A helical membrane pass occupies residues 218-238; the sequence is FIPVALLFGAILLSFQLYCFA. Residues 239-253 lie on the Extracellular side of the membrane; that stretch reads LEIFIKQIYNGPMIS. The chain crosses the membrane as a helical span at residues 254 to 274; that stretch reads ILSFLPTILICTFTPVLTVIY. Topologically, residues 275–302 are cytoplasmic; the sequence is NKYFVEPMTKWENHSSVVNAKKSKEAKN. A helical membrane pass occupies residues 303 to 323; the sequence is FVIIFLSSYVPLLITLFLYLP. At 324 to 447 the chain is on the extracellular side; the sequence is MGHLLTAEIR…DANFKKLLLQ (124 aa). Residues 448 to 468 form a helical membrane-spanning segment; sequence FGYLVMFSTIWPLAPFICLIV. The Cytoplasmic portion of the chain corresponds to 469–505; sequence NLIVYQVDLRKAVLYSKPEYFPFPIYDKPSSVSNTQK. Residues 506-526 traverse the membrane as a helical segment; that stretch reads LTVGLWNSVLVMFSILGCVIT. Residues 527–563 are Extracellular-facing; it reads ATLTYMYQSCNIPGVGAHTSIHTNKAWYLANPINHSW. Residues 564 to 584 traverse the membrane as a helical segment; it reads INIVLYAVFIEHVSVAIFFLF. Over 585 to 946 the chain is Cytoplasmic; the sequence is SSILKSSHDD…GLLHKLKKKL (362 aa). Disordered regions lie at residues 617-638 and 665-718; these read EKIP…RKGS and THAN…TEKR. The span at 628–638 shows a compositional bias: basic and acidic residues; the sequence is NEKELVQRKGS. S638 is modified (phosphoserine). Positions 671–689 are enriched in low complexity; the sequence is PSSLSSASSPSLSSSSSSS. T701 is subject to Phosphothreonine. 2 positions are modified to phosphoserine: S704 and S720. The residue at position 726 (T726) is a Phosphothreonine. S729 bears the Phosphoserine mark. Position 730 is a phosphotyrosine (Y730). A Phosphoserine modification is found at S757. Residues 759–784 are disordered; that stretch reads RDAKSSAESSNATNNNTLGTESKLLP. The span at 764–775 shows a compositional bias: low complexity; it reads SAESSNATNNNT. Phosphoserine occurs at positions 793, 844, and 847. The segment at 846 to 946 is disordered; that stretch reads VSVATEQTKK…GLLHKLKKKL (101 aa). At T850 the chain carries Phosphothreonine. Over residues 859-868 the composition is skewed to polar residues; the sequence is STKNGPSRSI. Residues 884-893 are compositionally biased toward low complexity; that stretch reads TTTTTTTDAT. The segment covering 895–905 has biased composition (basic residues); that stretch reads PHHHHHHHRHR. A compositionally biased stretch (low complexity) spans 916-927; the sequence is SKTTESSSSSSA. Over residues 931–946 the composition is skewed to basic residues; that stretch reads KPKHKKGLLHKLKKKL.

Interacts with BTN2.

The protein localises to the cell membrane. In terms of biological role, may be involved in ion homeostasis together with BTN1 or BTN2. This chain is Increased sodium tolerance protein 2 (IST2), found in Saccharomyces cerevisiae (strain ATCC 204508 / S288c) (Baker's yeast).